The primary structure comprises 601 residues: Aspartate--tRNA ligase (601 aa).

Residue Glu183 coordinates L-aspartate. The aspartate stretch occupies residues 207–210; that stretch reads QIFK. L-aspartate is bound at residue Arg229. Residues 229–231 and Gln238 contribute to the ATP site; that span reads RDE. An L-aspartate-binding site is contributed by His457. Glu497 provides a ligand contact to ATP. Arg504 contacts L-aspartate. An ATP-binding site is contributed by 549–552; sequence GIDR.

It belongs to the class-II aminoacyl-tRNA synthetase family. Type 1 subfamily. In terms of assembly, homodimer.

The protein localises to the cytoplasm. It catalyses the reaction tRNA(Asp) + L-aspartate + ATP = L-aspartyl-tRNA(Asp) + AMP + diphosphate. Catalyzes the attachment of L-aspartate to tRNA(Asp) in a two-step reaction: L-aspartate is first activated by ATP to form Asp-AMP and then transferred to the acceptor end of tRNA(Asp). The sequence is that of Aspartate--tRNA ligase from Leptospira interrogans serogroup Icterohaemorrhagiae serovar copenhageni (strain Fiocruz L1-130).